Here is a 345-residue protein sequence, read N- to C-terminus: Putative pyridoxal reductase (345 aa).

Residue Tyr60 is the Proton donor of the active site.

Belongs to the aldo/keto reductase family.

It is found in the cytoplasm. The protein resides in the nucleus. It carries out the reaction pyridoxine + NADP(+) = pyridoxal + NADPH + H(+). It functions in the pathway cofactor degradation; B6 vitamer degradation; pyridoxal from pyridoxine (dehydrogenase route): step 1/1. Catalyzes the reduction of pyridoxal (PL) with NADPH and oxidation of pyridoxine (PN) with NADP(+). The sequence is that of Putative pyridoxal reductase from Saccharomyces cerevisiae (strain ATCC 204508 / S288c) (Baker's yeast).